Reading from the N-terminus, the 336-residue chain is Ephrin-B2 (336 aa).

The first 28 residues, Met1–Ser28, serve as a signal peptide directing secretion. Topologically, residues Arg29–Ala232 are extracellular. The Ephrin RBD domain occupies Ile31 to Val167. N-linked (GlcNAc...) asparagine glycosylation occurs at Asn39. 2 cysteine pairs are disulfide-bonded: Cys65/Cys104 and Cys92/Cys156. N-linked (GlcNAc...) asparagine glycosylation is present at Asn142. The segment at Asp170–Ala216 is disordered. A compositionally biased stretch (polar residues) spans Asn193–Ala216. Residues Gly233–Leu253 traverse the membrane as a helical segment. The Cytoplasmic segment spans residues Lys254 to Val336. Ser263 carries the phosphoserine modification. Thr277 is subject to Phosphothreonine. Arg280 carries the omega-N-methylarginine modification. A PDZ-binding motif is present at residues Tyr334–Val336.

This sequence belongs to the ephrin family. As to quaternary structure, interacts with PDZRN3. Binds to the ephrin receptor EPHA3, EPHA4 and EPHB4. Inducible phosphorylation of tyrosine residues in the cytoplasmic domain. Expressed in inner and outer pillar cells of the organ of Corti (at protein level). Expressed on lateral floor plate cells, specifically on commissural axon segments that have passed through the floor plate. Expressed in cells of the retinal ganglion cell layer during retinal axon guidance to the optic disk. Expressed in myogenic progenitor cells.

Its subcellular location is the cell membrane. It localises to the cell junction. The protein localises to the adherens junction. In terms of biological role, cell surface transmembrane ligand for Eph receptors, a family of receptor tyrosine kinases which are crucial for migration, repulsion and adhesion during neuronal, vascular and epithelial development. Binds promiscuously Eph receptors residing on adjacent cells, leading to contact-dependent bidirectional signaling into neighboring cells. The signaling pathway downstream of the receptor is referred to as forward signaling while the signaling pathway downstream of the ephrin ligand is referred to as reverse signaling. Binds to receptor tyrosine kinase including EPHA4, EPHA3 and EPHB4. Together with EPHB4 plays a central role in heart morphogenesis and angiogenesis through regulation of cell adhesion and cell migration. EPHB4-mediated forward signaling controls cellular repulsion and segregation from EFNB2-expressing cells. May play a role in constraining the orientation of longitudinally projecting axons. This is Ephrin-B2 (Efnb2) from Mus musculus (Mouse).